The sequence spans 463 residues: ATP-dependent protease ATPase subunit HslU (463 aa).

Residues valine 19, 61–66 (GVGKTE), aspartate 277, glutamate 341, and arginine 413 each bind ATP.

This sequence belongs to the ClpX chaperone family. HslU subfamily. In terms of assembly, a double ring-shaped homohexamer of HslV is capped on each side by a ring-shaped HslU homohexamer. The assembly of the HslU/HslV complex is dependent on binding of ATP.

The protein localises to the cytoplasm. ATPase subunit of a proteasome-like degradation complex; this subunit has chaperone activity. The binding of ATP and its subsequent hydrolysis by HslU are essential for unfolding of protein substrates subsequently hydrolyzed by HslV. HslU recognizes the N-terminal part of its protein substrates and unfolds these before they are guided to HslV for hydrolysis. The sequence is that of ATP-dependent protease ATPase subunit HslU from Shouchella clausii (strain KSM-K16) (Alkalihalobacillus clausii).